The sequence spans 461 residues: Protein DVR-1 homolog (461 aa).

The first 30 residues, 1 to 30 (MEYSRKTYLDLNIMAKYILILSLFFGPGLS), serve as a signal peptide directing secretion. A propeptide spanning residues 31–338 (WDVFYSGDED…QKKGGKRPRK (308 aa)) is cleaved from the precursor. N-linked (GlcNAc...) asparagine glycosylation is present at N149. Residues 317 to 351 (SHLRRNRRAATRQKKGGKRPRKPDTDNDIASRDSA) are disordered. A compositionally biased stretch (basic residues) spans 318 to 337 (HLRRNRRAATRQKKGGKRPR). A compositionally biased stretch (basic and acidic residues) spans 338 to 347 (KPDTDNDIAS). Intrachain disulfides connect C360–C426, C389–C458, and C393–C460. A glycan (N-linked (GlcNAc...) asparagine) is linked at N402.

It belongs to the TGF-beta family. Homodimer; disulfide-linked.

The protein localises to the secreted. This chain is Protein DVR-1 homolog (DVR1), found in Strongylocentrotus purpuratus (Purple sea urchin).